The primary structure comprises 193 residues: DNA damage-inducible transcript 4-like protein (193 aa).

Belongs to the DDIT4 family.

The protein localises to the cytoplasm. Inhibits cell growth by regulating the TOR signaling pathway upstream of the TSC1-TSC2 complex and downstream of AKT1. This Mus musculus (Mouse) protein is DNA damage-inducible transcript 4-like protein (Ddit4l).